We begin with the raw amino-acid sequence, 1171 residues long: ATP-dependent helicase/deoxyribonuclease subunit B (1171 aa).

A UvrD-like helicase ATP-binding domain is found at 1 to 287 (MSLRFVIGRA…IPLMEQPRFH (287 aa)). ATP is bound at residue 8–15 (GRAGSGKS). The UvrD-like helicase C-terminal domain maps to 281–587 (MEQPRFHSPA…QFANIPPSLD (307 aa)). [4Fe-4S] cluster-binding residues include Cys805, Cys1129, Cys1132, and Cys1138.

It belongs to the helicase family. AddB/RexB type 1 subfamily. As to quaternary structure, heterodimer of AddA and AddB. It depends on Mg(2+) as a cofactor. [4Fe-4S] cluster is required as a cofactor.

The heterodimer acts as both an ATP-dependent DNA helicase and an ATP-dependent, dual-direction single-stranded exonuclease. Recognizes the chi site generating a DNA molecule suitable for the initiation of homologous recombination. The AddB subunit has 5' -&gt; 3' nuclease activity but not helicase activity. This chain is ATP-dependent helicase/deoxyribonuclease subunit B, found in Bacillus cereus (strain G9842).